The primary structure comprises 273 residues: Putative pyruvate, phosphate dikinase regulatory protein (273 aa).

Glycine 153–threonine 160 contributes to the ADP binding site.

It belongs to the pyruvate, phosphate/water dikinase regulatory protein family. PDRP subfamily.

The catalysed reaction is N(tele)-phospho-L-histidyl/L-threonyl-[pyruvate, phosphate dikinase] + ADP = N(tele)-phospho-L-histidyl/O-phospho-L-threonyl-[pyruvate, phosphate dikinase] + AMP + H(+). It catalyses the reaction N(tele)-phospho-L-histidyl/O-phospho-L-threonyl-[pyruvate, phosphate dikinase] + phosphate + H(+) = N(tele)-phospho-L-histidyl/L-threonyl-[pyruvate, phosphate dikinase] + diphosphate. Bifunctional serine/threonine kinase and phosphorylase involved in the regulation of the pyruvate, phosphate dikinase (PPDK) by catalyzing its phosphorylation/dephosphorylation. The sequence is that of Putative pyruvate, phosphate dikinase regulatory protein from Rhizobium leguminosarum bv. trifolii (strain WSM2304).